The sequence spans 274 residues: 2-dehydro-3-deoxyphosphooctonate aldolase (274 aa).

Belongs to the KdsA family.

The protein resides in the cytoplasm. The enzyme catalyses D-arabinose 5-phosphate + phosphoenolpyruvate + H2O = 3-deoxy-alpha-D-manno-2-octulosonate-8-phosphate + phosphate. It functions in the pathway carbohydrate biosynthesis; 3-deoxy-D-manno-octulosonate biosynthesis; 3-deoxy-D-manno-octulosonate from D-ribulose 5-phosphate: step 2/3. It participates in bacterial outer membrane biogenesis; lipopolysaccharide biosynthesis. This chain is 2-dehydro-3-deoxyphosphooctonate aldolase, found in Rickettsia peacockii (strain Rustic).